Here is a 159-residue protein sequence, read N- to C-terminus: Ribosomal RNA large subunit methyltransferase H (159 aa).

Position 108 (G108) interacts with S-adenosyl-L-methionine.

The protein belongs to the RNA methyltransferase RlmH family. In terms of assembly, homodimer.

The protein localises to the cytoplasm. The enzyme catalyses pseudouridine(1915) in 23S rRNA + S-adenosyl-L-methionine = N(3)-methylpseudouridine(1915) in 23S rRNA + S-adenosyl-L-homocysteine + H(+). Its function is as follows. Specifically methylates the pseudouridine at position 1915 (m3Psi1915) in 23S rRNA. This is Ribosomal RNA large subunit methyltransferase H from Lactobacillus gasseri (strain ATCC 33323 / DSM 20243 / BCRC 14619 / CIP 102991 / JCM 1131 / KCTC 3163 / NCIMB 11718 / NCTC 13722 / AM63).